A 148-amino-acid polypeptide reads, in one-letter code: Lysozyme-like protein 1 (148 aa).

An N-terminal signal peptide occupies residues 1–19 (MKSVGVFALIISFSIVAES). Positions 20–148 (KIYTRCKLAK…SEWKRGCEVS (129 aa)) constitute a C-type lysozyme domain. 4 disulfides stabilise this stretch: Cys25/Cys145, Cys49/Cys133, Cys83/Cys98, and Cys94/Cys112. Glu54 is a catalytic residue. An N-linked (GlcNAc...) asparagine glycan is attached at Asn58. Asp71 is an active-site residue.

It belongs to the glycosyl hydrolase 22 family. Monomer.

It localises to the secreted. It catalyses the reaction Hydrolysis of (1-&gt;4)-beta-linkages between N-acetylmuramic acid and N-acetyl-D-glucosamine residues in a peptidoglycan and between N-acetyl-D-glucosamine residues in chitodextrins.. This is Lysozyme-like protein 1 (Lyzl1) from Mus musculus (Mouse).